The sequence spans 282 residues: ATP phosphoribosyltransferase (282 aa).

It belongs to the ATP phosphoribosyltransferase family. Long subfamily. Mg(2+) is required as a cofactor.

The protein localises to the cytoplasm. The enzyme catalyses 1-(5-phospho-beta-D-ribosyl)-ATP + diphosphate = 5-phospho-alpha-D-ribose 1-diphosphate + ATP. Its pathway is amino-acid biosynthesis; L-histidine biosynthesis; L-histidine from 5-phospho-alpha-D-ribose 1-diphosphate: step 1/9. Feedback inhibited by histidine. Functionally, catalyzes the condensation of ATP and 5-phosphoribose 1-diphosphate to form N'-(5'-phosphoribosyl)-ATP (PR-ATP). Has a crucial role in the pathway because the rate of histidine biosynthesis seems to be controlled primarily by regulation of HisG enzymatic activity. The sequence is that of ATP phosphoribosyltransferase from Haloarcula marismortui (strain ATCC 43049 / DSM 3752 / JCM 8966 / VKM B-1809) (Halobacterium marismortui).